A 92-amino-acid chain; its full sequence is Protein OP-ORF (92 aa).

Residues lysine 53–lysine 82 adopt a coiled-coil conformation.

The polypeptide is Protein OP-ORF (Rice dwarf virus (isolate Fujian) (RDV)).